The sequence spans 53 residues: UPF0391 membrane protein Acid_3618 (53 aa).

2 consecutive transmembrane segments (helical) span residues 6 to 26 (LVFL…LAGA) and 28 to 48 (VGIA…AFLM).

Belongs to the UPF0391 family.

It is found in the cell membrane. The chain is UPF0391 membrane protein Acid_3618 from Solibacter usitatus (strain Ellin6076).